The primary structure comprises 200 residues: Guanylate kinase (200 aa).

A Guanylate kinase-like domain is found at 6–184 (GLLIVLSGPS…AVDKLKSILL (179 aa)). 13-20 (GPSGAGKG) is an ATP binding site.

Belongs to the guanylate kinase family.

The protein resides in the cytoplasm. It carries out the reaction GMP + ATP = GDP + ADP. Essential for recycling GMP and indirectly, cGMP. This is Guanylate kinase from Desulfitobacterium hafniense (strain Y51).